A 362-amino-acid chain; its full sequence is Alkanal monooxygenase alpha chain (362 aa).

The protein belongs to the bacterial luciferase oxidoreductase family. In terms of assembly, heterodimer of an alpha and a beta chain.

The enzyme catalyses a long-chain fatty aldehyde + FMNH2 + O2 = a long-chain fatty acid + hnu + FMN + H2O + 2 H(+). Light-emitting reaction in luminous bacteria. In Photorhabdus luminescens (Xenorhabdus luminescens), this protein is Alkanal monooxygenase alpha chain (luxA).